The chain runs to 138 residues: MALLPDKEKLLRNFLRCANWEEKYLYIIELGQRLPELRDEDKSPQNSIQGCQSQVWIVMRQNAQGIIELHGDSDAAIVKGLIAVVFILYDQMTPQDIVNFDVRPWFEKMALTQHLTPSRSQGLEAMIRAIRAKAAALS.

Residue Cys-51 is the Cysteine persulfide intermediate of the active site.

It belongs to the SufE family. As to quaternary structure, homodimer. Interacts with SufS.

The protein resides in the cytoplasm. It functions in the pathway cofactor biosynthesis; iron-sulfur cluster biosynthesis. Participates in cysteine desulfuration mediated by SufS. Cysteine desulfuration mobilizes sulfur from L-cysteine to yield L-alanine and constitutes an essential step in sulfur metabolism for biosynthesis of a variety of sulfur-containing biomolecules. Functions as a sulfur acceptor for SufS, by mediating the direct transfer of the sulfur atom from the S-sulfanylcysteine of SufS, an intermediate product of cysteine desulfuration process. The chain is Cysteine desulfuration protein SufE from Escherichia coli O45:K1 (strain S88 / ExPEC).